Reading from the N-terminus, the 323-residue chain is DNA-directed RNA polymerase subunit alpha (323 aa).

The interval 1-233 (MGQEKVTVST…DLFIPFFHAE (233 aa)) is alpha N-terminal domain (alpha-NTD). Residues 264–323 (IALKYIYIDQSELPPRVYNCLKRSNINTFLELLNNSQEELMKIQDFRIEDVKHILDVLEI) are alpha C-terminal domain (alpha-CTD).

It belongs to the RNA polymerase alpha chain family. In plastids the minimal PEP RNA polymerase catalytic core is composed of four subunits: alpha, beta, beta', and beta''. When a (nuclear-encoded) sigma factor is associated with the core the holoenzyme is formed, which can initiate transcription.

It localises to the plastid. Its subcellular location is the chloroplast. The enzyme catalyses RNA(n) + a ribonucleoside 5'-triphosphate = RNA(n+1) + diphosphate. Its function is as follows. DNA-dependent RNA polymerase catalyzes the transcription of DNA into RNA using the four ribonucleoside triphosphates as substrates. The sequence is that of DNA-directed RNA polymerase subunit alpha from Morus indica (Mulberry).